Here is a 263-residue protein sequence, read N- to C-terminus: 2-keto-4-pentenoate hydratase 1 (263 aa).

Belongs to the hydratase/decarboxylase family. MhpD subfamily. Requires a divalent metal cation as cofactor.

It catalyses the reaction (S)-4-hydroxy-2-oxopentanoate = (2Z)-2-hydroxypenta-2,4-dienoate + H2O. Its pathway is aromatic compound metabolism; 3-phenylpropanoate degradation. Functionally, catalyzes the conversion of 2-hydroxypentadienoic acid (enolic form of 2-oxopent-4-enoate) to 4-hydroxy-2-ketopentanoic acid. In Dechloromonas aromatica (strain RCB), this protein is 2-keto-4-pentenoate hydratase 1.